The sequence spans 419 residues: CinA-like protein (419 aa).

This sequence belongs to the CinA family.

In Parasynechococcus marenigrum (strain WH8102), this protein is CinA-like protein.